Consider the following 283-residue polypeptide: Mitochondrial intermembrane space import and assembly protein 40 (283 aa).

A mitochondrion-targeting transit peptide spans 1–35; the sequence is MFRPASRALLRAPTPAVGVARGPTRRFISSSTGST. The Mitochondrial matrix segment spans residues 36 to 46; the sequence is KPRSWKNTFIR. The chain crosses the membrane as a helical; Signal-anchor for type II membrane protein span at residues 47–64; it reads VGLASGAVYYYNTSSVFA. At 65–283 the chain is on the mitochondrial intermembrane side; it reads ETPSLSFRPE…EKTPEQQTEK (219 aa). The tract at residues 72–136 is disordered; the sequence is RPEAQPKHED…SAEELEAEAD (65 aa). A compositionally biased stretch (basic and acidic residues) spans 91–101; sequence IKPKSREEKKA. Residues 102–119 show a composition bias toward low complexity; it reads PAAAADAAATPASTGANA. 3 cysteine pairs are disulfide-bonded: C152-C154, C163-C196, and C173-C186. A CHCH domain is found at 160–204; that stretch reads YGPCGEEFRAAFSCFVYSEEEPKGMDCIDKFKAMQDCFRAHPDVY. 2 consecutive short sequence motifs (cx9C motif) follow at residues 163–173 and 186–196; these read CGEEFRAAFSC and CIDKFKAMQDC. Residues 211 to 283 form a disordered region; it reads DEEAGAEANA…EKTPEQQTEK (73 aa). Basic and acidic residues-rich tracts occupy residues 237 to 251 and 272 to 283; these read VEKHEQAKEVRDEVK and EQEKTPEQQTEK.

As to quaternary structure, monomer. Cu(2+) serves as cofactor. Zn(2+) is required as a cofactor.

The protein resides in the mitochondrion inner membrane. In terms of biological role, required for the import and folding of small cysteine-containing proteins (small Tim) in the mitochondrial intermembrane space (IMS). Forms a redox cycle with ERV1 that involves a disulfide relay system. Precursor proteins to be imported into the IMS are translocated in their reduced form into the mitochondria. The oxidized form of MIA40 forms a transient intermolecular disulfide bridge with the reduced precursor protein, resulting in oxidation of the precursor protein that now contains an intramolecular disulfide bond and is able to undergo folding in the IMS. This is Mitochondrial intermembrane space import and assembly protein 40 (mia40) from Emericella nidulans (strain FGSC A4 / ATCC 38163 / CBS 112.46 / NRRL 194 / M139) (Aspergillus nidulans).